Consider the following 115-residue polypeptide: U3-lycotoxin-Ls1a (115 aa).

The N-terminal stretch at Met-1 to Ala-20 is a signal peptide. Positions Glu-21–Arg-44 are excised as a propeptide. 4 disulfides stabilise this stretch: Cys-48–Cys-63, Cys-55–Cys-72, Cys-62–Cys-87, and Cys-74–Cys-85.

The protein belongs to the neurotoxin 19 (CSTX) family. 01 subfamily. In terms of tissue distribution, expressed by the venom gland.

The protein localises to the secreted. The protein is U3-lycotoxin-Ls1a of Lycosa singoriensis (Wolf spider).